The following is a 266-amino-acid chain: Stomatin homolog PH1511 (266 aa).

The helical transmembrane segment at 7-27 (FFVTSIILLFILIFLASAIKI) threads the bilayer. Coiled-coil stretches lie at residues 125-152 (GQAHLDELLSERDKLNMQLQRIIDEATD) and 178-213 (RQAEAERERRARITLAEAERQAAEKLREAAEIISEH).

The protein belongs to the band 7/mec-2 family. As to quaternary structure, homotrimer. Interacts with PH1510 and is cleaved by PH1510.

It localises to the membrane. The sequence is that of Stomatin homolog PH1511 from Pyrococcus horikoshii (strain ATCC 700860 / DSM 12428 / JCM 9974 / NBRC 100139 / OT-3).